The following is a 610-amino-acid chain: Alpha-fetoprotein (610 aa).

The first 18 residues, 1-18 (MKWVVSFFLLFLLNFSDS), serve as a signal peptide directing secretion. Albumin domains lie at 19–210 (RTMH…TSIT), 211–403 (KELR…EELE), and 404–602 (KYIQ…ALIS). Position 22 (H22) interacts with Cu(2+). 8 disulfide bridges follow: C99–C114, C113–C124, C148–C193, C192–C201, C224–C270, C269–C277, C289–C303, and C302–C314. 2 positions are modified to phosphoserine: S111 and S115. N-linked (GlcNAc...) asparagine glycosylation is found at N197 and N251. S345 is modified (phosphoserine). 7 cysteine pairs are disulfide-bonded: C385/C394, C417/C463, C462/C473, C486/C502, C501/C512, C539/C584, and C583/C592. Residue S445 is modified to Phosphoserine.

This sequence belongs to the ALB/AFP/VDB family. As to quaternary structure, dimeric and trimeric forms have been found in addition to the monomeric form. Sulfated. In terms of tissue distribution, plasma.

It is found in the secreted. In terms of biological role, binds copper, nickel, and fatty acids as well as, and bilirubin less well than, serum albumin. The protein is Alpha-fetoprotein (AFP) of Bos taurus (Bovine).